Consider the following 200-residue polypeptide: Phospholipase A2 inhibitor NAI (200 aa).

The signal sequence occupies residues 1 to 19 (MKSLLFCCLFGTFLATGMC). Cystine bridges form between Cys22–Cys46, Cys25–Cys32, Cys39–Cys67, Cys73–Cys94, Cys95–Cys100, Cys120–Cys145, Cys138–Cys165, and Cys171–Cys191.

Belongs to the CNF-like-inhibitor family. As to quaternary structure, heterotrimer of 2 subunits A and 1 subunit B; non-covalently linked. Expressed by the liver.

The protein localises to the secreted. In terms of biological role, inhibits the enzymatic activity of all phospholipase A2 tested, binding with micromole to nanomole affinity. This chain is Phospholipase A2 inhibitor NAI, found in Notechis ater (Black tiger snake).